Here is a 316-residue protein sequence, read N- to C-terminus: Methionyl-tRNA formyltransferase (316 aa).

(6S)-5,6,7,8-tetrahydrofolate is bound at residue 112 to 115 (SLLP).

This sequence belongs to the Fmt family.

The enzyme catalyses L-methionyl-tRNA(fMet) + (6R)-10-formyltetrahydrofolate = N-formyl-L-methionyl-tRNA(fMet) + (6S)-5,6,7,8-tetrahydrofolate + H(+). Functionally, attaches a formyl group to the free amino group of methionyl-tRNA(fMet). The formyl group appears to play a dual role in the initiator identity of N-formylmethionyl-tRNA by promoting its recognition by IF2 and preventing the misappropriation of this tRNA by the elongation apparatus. This Actinobacillus pleuropneumoniae serotype 7 (strain AP76) protein is Methionyl-tRNA formyltransferase.